Consider the following 56-residue polypeptide: Venom peptide 5 (56 aa).

An N-terminal signal peptide occupies residues 1–26; sequence MKTASFILSFVVLLIVIITWIGEVSA. A propeptide spanning residues 27 to 42 is cleaved from the precursor; that stretch reads VSEPEPVAKATAHAAA. An intrachain disulfide couples cysteine 49 to cysteine 54.

In terms of processing, probably contains 1 disulfide bond, which may be crucial for activity, since the linear peptide without disulfide bond is inactive. Expressed by the venom gland.

The protein resides in the secreted. This Eumenes pomiformis (Potter wasp) protein is Venom peptide 5.